Here is a 386-residue protein sequence, read N- to C-terminus: Galactokinase (386 aa).

35–38 (EHTD) contacts substrate. ATP contacts are provided by residues serine 69 and 125–131 (GAGLSSS). Positions 131 and 163 each coordinate Mg(2+). Residue aspartate 175 is the Proton acceptor of the active site. Tyrosine 224 is a binding site for substrate.

It belongs to the GHMP kinase family. GalK subfamily.

It localises to the cytoplasm. The enzyme catalyses alpha-D-galactose + ATP = alpha-D-galactose 1-phosphate + ADP + H(+). It participates in carbohydrate metabolism; galactose metabolism. In terms of biological role, catalyzes the transfer of the gamma-phosphate of ATP to D-galactose to form alpha-D-galactose-1-phosphate (Gal-1-P). The polypeptide is Galactokinase (Vibrio parahaemolyticus serotype O3:K6 (strain RIMD 2210633)).